A 212-amino-acid polypeptide reads, in one-letter code: Cytidylate kinase (212 aa).

Glycine 7–threonine 15 contributes to the ATP binding site.

It belongs to the cytidylate kinase family. Type 1 subfamily.

It is found in the cytoplasm. The enzyme catalyses CMP + ATP = CDP + ADP. The catalysed reaction is dCMP + ATP = dCDP + ADP. The protein is Cytidylate kinase of Nitrobacter winogradskyi (strain ATCC 25391 / DSM 10237 / CIP 104748 / NCIMB 11846 / Nb-255).